A 212-amino-acid polypeptide reads, in one-letter code: Ribosomal RNA small subunit methyltransferase G (212 aa).

S-adenosyl-L-methionine contacts are provided by residues G80, L85, 131 to 132 (AE), and R146.

Belongs to the methyltransferase superfamily. RNA methyltransferase RsmG family.

The protein resides in the cytoplasm. It carries out the reaction guanosine(527) in 16S rRNA + S-adenosyl-L-methionine = N(7)-methylguanosine(527) in 16S rRNA + S-adenosyl-L-homocysteine. Functionally, specifically methylates the N7 position of guanine in position 527 of 16S rRNA. This chain is Ribosomal RNA small subunit methyltransferase G, found in Xanthomonas oryzae pv. oryzae (strain KACC10331 / KXO85).